A 238-amino-acid polypeptide reads, in one-letter code: MKKTVIASSLAVALGVTGYALTTDNSAHASESTTNYAQLANLAQNNPSELNAHPVQAGAYNITFVKDGFKYNFTSDGQSWSWNYTYVGGADTVATTQAAPAAQSTDYSASYSNEASTQSVSSNQQSSNTNVEAVSAPKTTSYSASTSSSSSASTGGSVKEQFLANGGTEAAWNAIVMPESGGNPNAVNPAGYRGLGQTKESWGTGSVASQTKGMINYANSRYGSLDAAIAFRDNHGWW.

Residues 1 to 29 (MKKTVIASSLAVALGVTGYALTTDNSAHA) form the signal peptide. A disordered region spans residues 115 to 157 (ASTQSVSSNQQSSNTNVEAVSAPKTTSYSASTSSSSSASTGGS). 2 stretches are compositionally biased toward low complexity: residues 116 to 131 (STQS…NTNV) and 139 to 157 (TTSY…TGGS).

Belongs to the transglycosylase family. IsaA subfamily.

It is found in the secreted. Is able to cleave peptidoglycan. This Staphylococcus haemolyticus (strain JCSC1435) protein is Probable transglycosylase IsaA (isaA).